A 252-amino-acid polypeptide reads, in one-letter code: Sulfate transporter CysZ (252 aa).

Transmembrane regions (helical) follow at residues Phe-29 to Phe-49, Phe-66 to Phe-86, Leu-141 to Leu-160, Val-164 to Phe-186, and Ala-212 to Val-232.

It belongs to the CysZ family.

Its subcellular location is the cell inner membrane. In terms of biological role, high affinity, high specificity proton-dependent sulfate transporter, which mediates sulfate uptake. Provides the sulfur source for the cysteine synthesis pathway. In Vibrio atlanticus (strain LGP32) (Vibrio splendidus (strain Mel32)), this protein is Sulfate transporter CysZ.